A 90-amino-acid chain; its full sequence is Probable dynein light chain 2, cytoplasmic (90 aa).

It belongs to the dynein light chain family.

Its subcellular location is the cytoplasm. The protein resides in the cytoskeleton. Its function is as follows. Acts as one of several non-catalytic accessory components of a dynein complex. The chain is Probable dynein light chain 2, cytoplasmic (dlc-2) from Caenorhabditis elegans.